The primary structure comprises 313 residues: Potassium channel subfamily K member 6 (313 aa).

Residues 1–4 lie on the Cytoplasmic side of the membrane; that stretch reads MRRG. Residues 5 to 25 traverse the membrane as a helical segment; that stretch reads ALLASALAAYAGYLALGALLV. 2 N-linked (GlcNAc...) asparagine glycosylation sites follow: asparagine 79 and asparagine 85. Residues 90–115 constitute an intramembrane region (pore-forming); sequence AWDFASALFFASTLVTTVGYGYTTPL. 4 residues coordinate K(+): threonine 106, valine 107, glycine 108, and tyrosine 109. Positions 106–111 are selectivity filter 1; that stretch reads TVGYGY. A helical transmembrane segment spans residues 121 to 141; it reads AFSIVFALLGVPITMLLLTAS. The Cytoplasmic segment spans residues 142–172; the sequence is AQRLSLLLTHAPLSWLSLHWGWPPQRAARWH. Residues 173 to 193 traverse the membrane as a helical segment; that stretch reads LVALLMVIVAIFFLVPAAVFA. Residues 199–223 constitute an intramembrane region (pore-forming); that stretch reads WSFLDAFYFCFISLSTIGLGDYVPG. K(+) is bound by residues threonine 214, isoleucine 215, and glycine 216. The segment at 214–219 is selectivity filter 2; the sequence is TIGLGD. The helical transmembrane segment at 236 to 256 threads the bilayer; it reads VLVTAYLFLGLVAMVLVLQTF. The Cytoplasmic segment spans residues 257–313; the sequence is RRVSDLHGLTELILLPDPDPASLSQDEDDQVAVLDARTDLHQHLSAASHADYASIPR. 2 short sequence motifs (lysosomal targeting signal) span residues 282 to 290 and 308 to 312; these read DEDDQVAVL and YASIP.

Belongs to the two pore domain potassium channel (TC 1.A.1.8) family. Homodimer; disulfide-linked. In terms of processing, N-glycosylation is necessary for targeting to lysosomes.

Its subcellular location is the late endosome membrane. It is found in the lysosome membrane. The enzyme catalyses K(+)(in) = K(+)(out). Functionally, k(+) channel that conducts outward rectifying currents at the membranes of the endolysosomal system. Active in lysosomes where it regulates lysosome numbers and size. In macrophages, enables K(+) efflux coupled to ATP-induced NLRP3 inflammasome activation upon bacterial infection. Cooperates with ATP-gated P2RX7 to activate NLRP3 inflammasome, with P2RX7 conducting Ca(2+) and Na(+) influx that sets the membrane potential for K(+) efflux. This Mus musculus (Mouse) protein is Potassium channel subfamily K member 6.